A 157-amino-acid polypeptide reads, in one-letter code: Ribosomal RNA large subunit methyltransferase H (157 aa).

S-adenosyl-L-methionine-binding positions include Leu73, Gly105, and 124–129 (LSLMTF).

It belongs to the RNA methyltransferase RlmH family. As to quaternary structure, homodimer.

It is found in the cytoplasm. It catalyses the reaction pseudouridine(1915) in 23S rRNA + S-adenosyl-L-methionine = N(3)-methylpseudouridine(1915) in 23S rRNA + S-adenosyl-L-homocysteine + H(+). In terms of biological role, specifically methylates the pseudouridine at position 1915 (m3Psi1915) in 23S rRNA. The polypeptide is Ribosomal RNA large subunit methyltransferase H (Flavobacterium johnsoniae (strain ATCC 17061 / DSM 2064 / JCM 8514 / BCRC 14874 / CCUG 350202 / NBRC 14942 / NCIMB 11054 / UW101) (Cytophaga johnsonae)).